Here is a 459-residue protein sequence, read N- to C-terminus: MASLIGGSAIQHLAQDIDTNKINHKAKANGPNLAPKSRALDMVSKLEPSRGPVHEHWWDLTSPQLASMLEEAGYPVGRQLEILLFYNHTIPEADSSRNWQSLLPVTVVPLEYSWKWDTACESPEVRLTIEAFGDLSGTRADPLNQAAAIELLHRTKGVLPDLNQTWINHFCSTLFDEDKDKYMEEAQSGTGMRLQSTMLVAFEFGRTSTSTKTYLTPRRLGQQGFARLPEYMPAIQALGPSRALDTLMDFLHTSPEGVELTPFGLSFDNVEPTSSRLKFYFASPNTSYNSLREVLTLGCRISKANFNIEEKIRTIHSLAKALMVAPDNLPDDEHISARAQPQSLSSASDPVTSDIVKERTSLLAGYQYYFDIAPGADLPDIRFYAPIRKELINDRGVAAAVTDWMKAQGRGKFCDNYVRMLEGMAGERGLSKCHGLHSFIGCLIRRDGELDVTSYLLPG.

Residues 107-108 and Glu-111 each bind L-tryptophan; that span reads VV. Substrate-binding residues include Arg-126, Arg-276, Lys-278, Tyr-280, and Tyr-384.

It belongs to the tryptophan dimethylallyltransferase family.

The catalysed reaction is quinolinone B + dimethylallyl diphosphate = peniprequinolone + diphosphate. It functions in the pathway secondary metabolite biosynthesis. It participates in alkaloid biosynthesis. Its pathway is mycotoxin biosynthesis. Its function is as follows. Prenyltransferase; part of the gene cluster that mediates the biosynthesis of penigequinolones, potent insecticidal alkaloids that contain a highly modified 10-carbon prenyl group. The first stage is catalyzed by the nonribosomal peptide synthetase penN that condenses anthranilic acid and O-methyl-L-tyrosine to produce 4'-methoxycyclopeptin. 4'-methoxycyclopeptin is then converted to 4'-methoxydehydrocyclopeptin by the ketoglutarate-dependent dioxygenase penM through dehydrogenation to form a double bond between C-alpha and C-beta of the O-methyltyrosine side chain. PenM also converts its first product methoxydehydrocyclopeptin to 4'-methoxycyclopenin. The following conversion of 4'methoxycyclopenin into 4'-methoxyviridicatin is catalyzed by the cyclopenase penL. 4'-methoxyviridicatin is the precursor of quinolone natural products, and is further converted to quinolinone B. The prenyltransferase penI then catalyzes the canonical Friedel-Crafts alkylation of quinolinone B with dimethylallyl cation to yield dimethylallyl quinolone, which is subjected to FAD-dependent dehydrogenation by the FAD-linked oxidoreductase penH to yield conjugated aryl diene. The delta(3') double bond then serves as the site of the second alkylation with DMAPP catalyzed by the prenyltransferase penG to yield a carbenium ion intermediate, which can be attacked by H(2)O to yield a styrenyl quinolone containing a C3'-hydroxyprenyl chain, or undergo cyclization to yield yaequinolones J1 and J2. The conversion of the styrenyl quinolone into the tetrahydrofuran-containing yaequinolone C is performed by the FAD-dependent monooxygenase penE and involves epoxidation of the terminal C7'-C8' olefin, followed by epoxide ring opening initiated by the C3' hydroxyl group. The predicted cysteine hydrolase penJ acts as an epoxide hydrolase that enhances the rate of the 5-exo-tet cyclization step, increasing the yield of yaequinolone C. PenF catalyzes the cationic rearrangement of the epoxide formed by penE (before ring opening to produce yaequinolone C) into yaequinolone D. Finally, the short-chain dehydrogenase/reductase (SDR)-like reductase penD, catalyzes both the dehydration of yaequinolone D and the reduction of the resulting oxonium to yield penigequinolone. In Penicillium thymicola, this protein is Prenyltransferase penI.